The chain runs to 102 residues: Small ribosomal subunit protein uS10 (102 aa).

The disordered stretch occupies residues 34–58; the sequence is VSGPVPLPTKTLEVPSRKSPDGEGT.

This sequence belongs to the universal ribosomal protein uS10 family. In terms of assembly, part of the 30S ribosomal subunit.

In terms of biological role, involved in the binding of tRNA to the ribosomes. The sequence is that of Small ribosomal subunit protein uS10 from Halobacterium salinarum (strain ATCC 29341 / DSM 671 / R1).